We begin with the raw amino-acid sequence, 700 residues long: Elongation factor G 1 (700 aa).

One can recognise a tr-type G domain in the interval 8 to 290; that stretch reads ERYRNIGISA…AVIDYLPSPA (283 aa). GTP-binding positions include 17–24, 88–92, and 142–145; these read AHIDAGKT, DTPGH, and NKMD.

Belongs to the TRAFAC class translation factor GTPase superfamily. Classic translation factor GTPase family. EF-G/EF-2 subfamily.

The protein localises to the cytoplasm. Its function is as follows. Catalyzes the GTP-dependent ribosomal translocation step during translation elongation. During this step, the ribosome changes from the pre-translocational (PRE) to the post-translocational (POST) state as the newly formed A-site-bound peptidyl-tRNA and P-site-bound deacylated tRNA move to the P and E sites, respectively. Catalyzes the coordinated movement of the two tRNA molecules, the mRNA and conformational changes in the ribosome. In Bordetella parapertussis (strain 12822 / ATCC BAA-587 / NCTC 13253), this protein is Elongation factor G 1.